Consider the following 475-residue polypeptide: Ribulose bisphosphate carboxylase large chain (475 aa).

Positions M1–S2 are excised as a propeptide. N-acetylproline is present on P3. N6,N6,N6-trimethyllysine is present on K14. Positions 123 and 173 each coordinate substrate. K175 functions as the Proton acceptor in the catalytic mechanism. Position 177 (K177) interacts with substrate. 3 residues coordinate Mg(2+): K201, D203, and E204. Residue K201 is modified to N6-carboxylysine. The Proton acceptor role is filled by H294. 3 residues coordinate substrate: R295, H327, and S379.

The protein belongs to the RuBisCO large chain family. Type I subfamily. Heterohexadecamer of 8 large chains and 8 small chains; disulfide-linked. The disulfide link is formed within the large subunit homodimers. Mg(2+) serves as cofactor. The disulfide bond which can form in the large chain dimeric partners within the hexadecamer appears to be associated with oxidative stress and protein turnover.

The protein resides in the plastid. Its subcellular location is the chloroplast. The catalysed reaction is 2 (2R)-3-phosphoglycerate + 2 H(+) = D-ribulose 1,5-bisphosphate + CO2 + H2O. The enzyme catalyses D-ribulose 1,5-bisphosphate + O2 = 2-phosphoglycolate + (2R)-3-phosphoglycerate + 2 H(+). Functionally, ruBisCO catalyzes two reactions: the carboxylation of D-ribulose 1,5-bisphosphate, the primary event in carbon dioxide fixation, as well as the oxidative fragmentation of the pentose substrate in the photorespiration process. Both reactions occur simultaneously and in competition at the same active site. The protein is Ribulose bisphosphate carboxylase large chain of Chloranthus spicatus (Chulantree).